A 607-amino-acid polypeptide reads, in one-letter code: ATP-dependent DNA helicase II subunit 1 (607 aa).

A Ku domain is found at 241-452; that stretch reads MDLGNDVRIG…IETMQRILRG (212 aa). One can recognise an SAP domain in the interval 570-604; it reads IKALKVSQLKDILRDRGLRVSGKKADLLDNLTNYV.

This sequence belongs to the ku70 family. As to quaternary structure, heterodimer of pku70 and pku80.

Its subcellular location is the nucleus. It is found in the chromosome. The protein resides in the telomere. It carries out the reaction ATP + H2O = ADP + phosphate + H(+). Single-stranded DNA-dependent ATP-dependent helicase. Involved in non-homologous end joining (NHEJ) DNA double strand break repair. DNA-binding is sequence-independent but has a high affinity to nicks in double-stranded DNA and to the ends of duplex DNA. Binds to naturally occurring chromosomal ends, and therefore provides chromosomal end protection. Required also for telomere recombination to repair telomeric ends in the absence of telomerase. ku70, of the ku70/ku80 heterodimer, binds to the stem loop of tlc1, the RNA component of telomerase. Required for mating-type switching. Involved in telomere maintenance. Interacts with telomeric repeats and subtelomeric sequences thereby controlling telomere length and protecting against subtelomeric rearrangement. Maintains telomeric chromatin, which is involved in silencing the expression of genes located at the telomere. This chain is ATP-dependent DNA helicase II subunit 1 (pku70), found in Schizosaccharomyces pombe (strain 972 / ATCC 24843) (Fission yeast).